Consider the following 129-residue polypeptide: MNSSTALMCFALLLISPLCLGYSDEDREADSRRIAEIIQNAQDDDSKINSTQELLDIYRRLYPTLSLEDRENIDKFVNEHTDAIVIDGVPIQGGRKAKIIGKIVSPAAKGLAVGFFEELGSKIAQLFTG.

A signal peptide spans 1–21 (MNSSTALMCFALLLISPLCLG). Asn-49 carries N-linked (GlcNAc...) asparagine glycosylation.

This sequence belongs to the Turandot family.

The protein resides in the secreted. Its function is as follows. A humoral factor that plays a role in stress tolerance; gives increased resistance to the lethal effects of bacterial challenge and stress. Regulated by the JAK/STAT pathway and NF-KB-like Relish pathway in the fat body, upd3 in the hemocytes and Mekk1 in response to septic injury and consequent immune response. This is Protein Turandot A1/2 (TotA1) from Drosophila sechellia (Fruit fly).